Here is a 203-residue protein sequence, read N- to C-terminus: E3 ubiquitin-protein ligase RNF152 (203 aa).

An RING-type zinc finger spans residues 12–55; sequence CQICFNYYSPRRRPKLLDCKHTCCSVCLQQMRTSQKDVRCPWCR. The segment at 106–165 is necessary for interaction with RRAGA; sequence ISKERTLLPGDMGCRLLPGSQQKSLTVVTIPAEQQPLQGGAPQEAVEEEPDRRGVAKSST. The segment at 140–159 is disordered; it reads QPLQGGAPQEAVEEEPDRRG. The helical transmembrane segment at 167 to 187 threads the bilayer; that stretch reads SGVCTVILVACVLVFLLGIVL.

Belongs to the RNF152 family. Interacts with RRAGA (inactive GDP-bound form); stimulated by amino acid starvation. Interacts with SEC16A. Ubiquitinated. Autoubiquitinated in vitro, leading to its degradation by the proteasome.

The protein localises to the lysosome membrane. It catalyses the reaction S-ubiquitinyl-[E2 ubiquitin-conjugating enzyme]-L-cysteine + [acceptor protein]-L-lysine = [E2 ubiquitin-conjugating enzyme]-L-cysteine + N(6)-ubiquitinyl-[acceptor protein]-L-lysine.. It participates in protein modification; protein ubiquitination. In terms of biological role, E3 ubiquitin-protein ligase that acts as a negative regulator of mTORC1 signaling by mediating ubiquitination of RagA/RRAGA and RHEB. Catalyzes 'Lys-63'-linked polyubiquitination of RagA/RRAGA in response to amino acid starvation, thereby regulating mTORC1 signaling. Also mediates monoubiquitination of RHEB, promoting its association with the TSC-TBC complex and subsequent inhibition. Also mediates 'Lys-48'-linked polyubiquitination of target proteins and their subsequent targeting to the proteasome for degradation. Induces apoptosis when overexpressed. The chain is E3 ubiquitin-protein ligase RNF152 from Rattus norvegicus (Rat).